We begin with the raw amino-acid sequence, 113 residues long: MSELDSQVPTAFDPFADANAEDSGAGTKEYVHIRVQQRNGRKSLTTVQGLKKEYSYTKILKDLKKEFCCNGTVVQDSELGQVIQLQGDQRKNVSTFLVQAGLVKKDDIQIHGF.

The segment at 1-24 (MSELDSQVPTAFDPFADANAEDSG) is disordered. Ser-2 is subject to N-acetylserine.

The protein belongs to the SUI1 family.

Its function is as follows. Probably involved in translation. This Brassica oleracea (Wild cabbage) protein is Protein translation factor SUI1 homolog.